Here is a 323-residue protein sequence, read N- to C-terminus: ATP synthase gamma chain (323 aa).

The protein belongs to the ATPase gamma chain family. In terms of assembly, F-type ATPases have 2 components, CF(1) - the catalytic core - and CF(0) - the membrane proton channel. CF(1) has five subunits: alpha(3), beta(3), gamma(1), delta(1), epsilon(1). CF(0) has three main subunits: a, b and c.

It is found in the cell membrane. Functionally, produces ATP from ADP in the presence of a proton gradient across the membrane. The gamma chain is believed to be important in regulating ATPase activity and the flow of protons through the CF(0) complex. The polypeptide is ATP synthase gamma chain (Nocardia farcinica (strain IFM 10152)).